We begin with the raw amino-acid sequence, 364 residues long: Mannose-1-phosphate guanyltransferase (364 aa).

The protein belongs to the transferase hexapeptide repeat family.

Its subcellular location is the cytoplasm. It catalyses the reaction alpha-D-mannose 1-phosphate + GTP + H(+) = GDP-alpha-D-mannose + diphosphate. It functions in the pathway nucleotide-sugar biosynthesis; GDP-alpha-D-mannose biosynthesis; GDP-alpha-D-mannose from alpha-D-mannose 1-phosphate (GTP route): step 1/1. Its function is as follows. Involved in cell wall synthesis where it is required for glycosylation. Involved in cell cycle progression through cell-size checkpoint. This chain is Mannose-1-phosphate guanyltransferase (MPG1), found in Gibberella zeae (strain ATCC MYA-4620 / CBS 123657 / FGSC 9075 / NRRL 31084 / PH-1) (Wheat head blight fungus).